Reading from the N-terminus, the 366-residue chain is Alanine racemase (366 aa).

Residue Lys40 is the Proton acceptor; specific for D-alanine of the active site. The residue at position 40 (Lys40) is an N6-(pyridoxal phosphate)lysine. Position 136 (Arg136) interacts with substrate. Catalysis depends on Tyr263, which acts as the Proton acceptor; specific for L-alanine. Residue Met310 participates in substrate binding.

It belongs to the alanine racemase family. It depends on pyridoxal 5'-phosphate as a cofactor.

It carries out the reaction L-alanine = D-alanine. It participates in amino-acid biosynthesis; D-alanine biosynthesis; D-alanine from L-alanine: step 1/1. Catalyzes the interconversion of L-alanine and D-alanine. May also act on other amino acids. The sequence is that of Alanine racemase (alr) from Streptococcus pyogenes serotype M28 (strain MGAS6180).